Consider the following 536-residue polypeptide: Plasmepsin V (536 aa).

The first 34 residues, 1–34 (MVGASLGPPGRGSLSRLIRLVICVLTLCALSVQG), serve as a signal peptide directing secretion. The Lumenal segment spans residues 35–492 (RSESTEGHSK…RKDNIFLKIP (458 aa)). The 401-residue stretch at 62–462 (YFLDIDIGTP…DIQKNRIGFV (401 aa)) folds into the Peptidase A1 domain. Residue D80 is part of the active site. Disulfide bonds link C90/C172, C93/C96, C117/C128, C122/C133, C220/C466, C337/C382, and C391/C427. Over residues 244-258 (SKSVSGQGSGPVSES) the composition is skewed to low complexity. A disordered region spans residues 244–264 (SKSVSGQGSGPVSESLSESGE). D313 is an active-site residue. The chain crosses the membrane as a helical span at residues 493–513 (FFYLYSLFVVFALSVLLSLVF). Residues 514-536 (YVRRLYHMEYSPLPSEGKAPADA) lie on the Cytoplasmic side of the membrane.

This sequence belongs to the peptidase A1 family. As to quaternary structure, component of a complex composed of SPC25 and PMV; the interaction is mediated via the transmembrane domains. The complex interacts with the SEC61 channel-forming translocon complex and is involved in the recognition and import of PEXEL motif-containing proteins into the ER for subsequent export. In terms of processing, it is not clear if the zymogen has a cleavable propeptide. Cleavage of the putative propeptide is dispensable for catalytic activity.

The protein localises to the endoplasmic reticulum membrane. Inhibited by peptidomimetic inhibitors such as WEHI-842. Functionally, during the asexual blood stage, plays an essential role in the export of several proteins into the host erythrocytes by cleaving the pentameric localization motif RxLxE/Q/D (termed Plasmodium export element (PEXEL)) located downstream of the N-terminal secretory signal sequence. Specifically, cleaves after the leucine residue in the RxLxE/Q/D (or RxLxxE) motif of exported proteins including EMP1. Also, by regulating protein export, plays an essential role in gametocyte development and thus parasite transmission to the mosquito vector. This chain is Plasmepsin V, found in Plasmodium vivax (strain Salvador I).